The following is a 223-amino-acid chain: Agamous-like MADS-box protein AGL11 (223 aa).

An MADS-box domain is found at 1–61; it reads MGRGKIEIKR…GRVYEYSNNN (61 aa). In terms of domain architecture, K-box spans 87–177; that stretch reads AQYYQQESAK…RTKIAEVERL (91 aa).

As to expression, expressed in flowers and seeds. Expressed in endotesta cell layer of developing seeds.

The protein resides in the nucleus. Functionally, probable transcription factor involved in seed development. Plays a role in seed morphogenesis by promoting the correct development of endotesta cell layer, which directs the further development of the seed coat, the endosperm, and consequently the embryo. This chain is Agamous-like MADS-box protein AGL11, found in Vitis vinifera (Grape).